The sequence spans 766 residues: Dipeptidyl peptidase 4 (766 aa).

The Cytoplasmic segment spans residues 1-6 (MKTPWK). A helical; Signal-anchor for type II membrane protein transmembrane segment spans residues 7-27 (VLLGLLGIAALVTVITVPVVL). Residues 28-766 (LNKGTDDAAA…HFLKQCFSLP (739 aa)) lie on the Extracellular side of the membrane. N-linked (GlcNAc...) asparagine glycosylation is found at Asn85, Asn92, Asn150, Asn179, Asn219, Asn229, Asn279, and Asn321. Intrachain disulfides connect Cys385–Cys394, Cys444–Cys447, and Cys454–Cys472. Ser630 serves as the catalytic Charge relay system. Cys649 and Cys762 form a disulfide bridge. The N-linked (GlcNAc...) asparagine glycan is linked to Asn685. Residues Asp708 and His740 each act as charge relay system in the active site.

It belongs to the peptidase S9B family. DPPIV subfamily. In terms of assembly, monomer. Homodimer. Heterodimer with Seprase (FAP). Requires homodimerization for optimal dipeptidyl peptidase activity and T-cell costimulation. Found in a membrane raft complex, at least composed of BCL10, CARD11, DPP4 and IKBKB. Associates with collagen. Interacts with PTPRC; the interaction is enhanced in an interleukin-12-dependent manner in activated lymphocytes. Interacts (via extracellular domain) with ADA; does not inhibit its dipeptidyl peptidase activity. Interacts with CAV1 (via the N-terminus); the interaction is direct. Interacts (via cytoplasmic tail) with CARD11 (via PDZ domain); its homodimerization is necessary for interaction with CARD11. Interacts with IGF2R; the interaction is direct. Interacts with GPC3. Post-translationally, the soluble form (Dipeptidyl peptidase 4 soluble form also named SDPP) derives from the membrane form (Dipeptidyl peptidase 4 membrane form also named MDPP) by proteolytic processing. In terms of processing, N- and O-Glycosylated. Phosphorylated. Mannose 6-phosphate residues in the carbohydrate moiety are necessary for interaction with IGF2R in activated T-cells. Mannose 6-phosphorylation is induced during T-cell activation.

The protein resides in the secreted. Its subcellular location is the cell membrane. The protein localises to the apical cell membrane. It localises to the cell projection. It is found in the invadopodium membrane. The protein resides in the lamellipodium membrane. Its subcellular location is the cell junction. The protein localises to the membrane raft. The catalysed reaction is Release of an N-terminal dipeptide, Xaa-Yaa-|-Zaa-, from a polypeptide, preferentially when Yaa is Pro, provided Zaa is neither Pro nor hydroxyproline.. Its activity is regulated as follows. Inhibited by GPC3 and diprotin A. In terms of biological role, cell surface glycoprotein receptor involved in the costimulatory signal essential for T-cell receptor (TCR)-mediated T-cell activation. Acts as a positive regulator of T-cell coactivation, by binding at least ADA, CAV1, IGF2R, and PTPRC. Its binding to CAV1 and CARD11 induces T-cell proliferation and NF-kappa-B activation in a T-cell receptor/CD3-dependent manner. Its interaction with ADA also regulates lymphocyte-epithelial cell adhesion. In association with FAP is involved in the pericellular proteolysis of the extracellular matrix (ECM), the migration and invasion of endothelial cells into the ECM. May be involved in the promotion of lymphatic endothelial cells adhesion, migration and tube formation. When overexpressed, enhanced cell proliferation, a process inhibited by GPC3. Also acts as a serine exopeptidase with a dipeptidyl peptidase activity that regulates various physiological processes by cleaving peptides in the circulation, including many chemokines, mitogenic growth factors, neuropeptides and peptide hormones such as brain natriuretic peptide 32. Removes N-terminal dipeptides sequentially from polypeptides having unsubstituted N-termini provided that the penultimate residue is proline. In Sus scrofa (Pig), this protein is Dipeptidyl peptidase 4 (DPP4).